A 93-amino-acid chain; its full sequence is MYPTRPHYWRRRLSINRPQAFLLLILCLFFIHHCDASRFSSSSVFYRNPNYDHSNNTVRRGHFLGFLPRHLPVPASAPSRKHNDIGIQALLSP.

An N-terminal signal peptide occupies residues 1 to 35 (MYPTRPHYWRRRLSINRPQAFLLLILCLFFIHHCD).

In terms of tissue distribution, expressed in mainly in buds. Lower levels in roots. Detected at the base of pedicel, in the floral and funicule abscission zones, in vascular tissues, in guard cells of young seedlings and in hydathodes.

Its subcellular location is the secreted. It localises to the extracellular space. In terms of biological role, may be involved in floral abscission. The chain is Protein IDA-LIKE 4 (IDL4) from Arabidopsis thaliana (Mouse-ear cress).